A 971-amino-acid polypeptide reads, in one-letter code: MSTSVSIATSSPVLTMNPIITEHDFRFPRRPSAWPGAAIHNAPTQRTXNSNRIPNSRDASASFKEHKTDMATTYSLARQGLGGSALFPFLQNGLADSDRSIDRMQQDDPLATQVWKFFARTKHQLPSQHRMENLTWRMMALNIRRHKEEQQQRQDEADARRKKNMDAGSRAFRLGRPMMQSSPSGIAQLRKSSENNLAQPDAMNLDDFIFSDNSGSPINFASPEGDKMVDDRSGSSMASAIPIKSRKEPSLQNFVPQSVPVQPAHQATQGSEFNYVNRHLRKTSIDDRRTRKRPANFSPQVPAVNSTAAQNDLDLDSELHDYSLDQPNQAGIPQQSNGSNVPFNIDTFMENDSMVNNGNFQQNFSFSPSTSPMIPHGPFSGMYHNSSVPSASMSNNNNNSDFYSPPASAYPSNVSTPHPVPEQEGFYFGSQDARTQRPQGFQQSIGSMLSQQFMYGGSNGNSGSTMFSAPGTASESMSAYSTAPSSFGHIDPSQVFQNEQAVTSPTIQMPQDNMFSFGADSDDEDNNAFADRNVSMQKDMSSSLDESGAMGWDASLPGQFSTQAARFPGGPTRKQVMIGGTTTDFVDNNGDWESNGLERSQSQSFRGGNLRRQHPKLPRNASTPVHFGGQQNGFEQLAQSMQSSPAGDGNGTMSGFSSVAPSRPSSPPMSKQGSTTNLQAAAGNGNDGNAPTTCTNCFTQTTPLWRRNPEGQPLCNACGLFLKLHGVVRPLSLKTDVIKKRNRGSGTNVPVGGSSTRSKKTASTLNSRKNSTLSMSTATANSTKPNSSNPTPRVTTPPATSQPPSSKDVDSPVSGTTSGANTAGSTPNSHFGGPGPSSGAVGGKGVVPIAAAPPKTSPGPGASSMSMQRPATASSKRQRRHSKSIGGDVPVSMDIDSPDSTSSIDGPRPFGSSAGLSSLPGGMSASSFNLNQRPSTLGSATGMISMSGGQTSSLIGSSAGPQEWEWLTMSL.

5 disordered regions span residues 39–61, 146–169, 262–307, 390–416, and 587–691; these read IHNA…DASA, HKEE…DAGS, QPAH…VNST, SASM…NVST, and DNNG…GNAP. A compositionally biased stretch (polar residues) spans 42–59; sequence APTQRTXNSNRIPNSRDA. Residues 146 to 159 are compositionally biased toward basic and acidic residues; it reads HKEEQQQRQDEADA. 2 stretches are compositionally biased toward polar residues: residues 262 to 274 and 297 to 307; these read QPAH…SEFN and FSPQVPAVNST. Residues 390–400 show a composition bias toward low complexity; that stretch reads SASMSNNNNNS. Polar residues-rich tracts occupy residues 597–606 and 632–645; these read LERSQSQSFR and NGFE…QSSP. 2 stretches are compositionally biased toward low complexity: residues 654 to 663 and 680 to 691; these read SGFSSVAPSR and AAAGNGNDGNAP. The GATA-type zinc finger occupies 694 to 718; that stretch reads CTNCFTQTTPLWRRNPEGQPLCNAC. A disordered region spans residues 742-918; it reads NRGSGTNVPV…PFGSSAGLSS (177 aa). Over residues 744-794 the composition is skewed to polar residues; the sequence is GSGTNVPVGGSSTRSKKTASTLNSRKNSTLSMSTATANSTKPNSSNPTPRV. The span at 796–826 shows a compositional bias: low complexity; the sequence is TPPATSQPPSSKDVDSPVSGTTSGANTAGST. Residues 832–845 show a composition bias toward gly residues; that stretch reads GGPGPSSGAVGGKG. The segment covering 863-875 has biased composition (polar residues); the sequence is SSMSMQRPATASS. The span at 892-918 shows a compositional bias: low complexity; the sequence is SMDIDSPDSTSSIDGPRPFGSSAGLSS.

It localises to the nucleus. In terms of biological role, major nitrogen regulatory protein. Positively acting regulatory gene of nitrogen metabolite repression. In Fusarium fujikuroi (Bakanae and foot rot disease fungus), this protein is Nitrogen regulatory protein areA (AREA).